Reading from the N-terminus, the 139-residue chain is Histone H2B (139 aa).

Basic and acidic residues predominate over residues 1–10 (MAPKAAEKKP). The tract at residues 1-47 (MAPKAAEKKPSTGGKAPAGGKAPAEKKEAGKKTAASGEKKKRTKARK) is disordered. Lysine 8 and lysine 9 each carry N6-acetyllysine; alternate. Residues lysine 8 and lysine 9 each participate in a glycyl lysine isopeptide (Lys-Gly) (interchain with G-Cter in SUMO); alternate cross-link. The segment covering 11 to 22 (STGGKAPAGGKA) has biased composition (low complexity). At lysine 15 the chain carries N6-acetyllysine. At lysine 26 the chain carries N6-acetyllysine; alternate. Residue lysine 26 forms a Glycyl lysine isopeptide (Lys-Gly) (interchain with G-Cter in SUMO); alternate linkage. A Glycyl lysine isopeptide (Lys-Gly) (interchain with G-Cter in SUMO) cross-link involves residue lysine 27. Lysine 133 participates in a covalent cross-link: Glycyl lysine isopeptide (Lys-Gly) (interchain with G-Cter in ubiquitin).

Belongs to the histone H2B family. The nucleosome is a histone octamer containing two molecules each of H2A, H2B, H3 and H4 assembled in one H3-H4 heterotetramer and two H2A-H2B heterodimers. The octamer wraps approximately 147 bp of DNA. Monoubiquitinated by the UBC2-BRE1 complex to form H2BK123ub1. H2BK123ub1 gives a specific tag for epigenetic transcriptional activation and is also prerequisite for H3K4me and H3K79me formation. H2BK123ub1 also modulates the formation of double-strand breaks during meiosis and is a prerequisite for DNA-damage checkpoint activation. Post-translationally, acetylated by GCN5 to form H2BK11ac and H2BK16ac. H2BK16ac can also be formed by ESA1. Acetylation of N-terminal lysines and particularly formation of H2BK11acK16ac has a positive effect on transcription. In terms of processing, sumoylation to form H2BK6su or H2BK7su, and probably also H2BK16su or H2BK17su, occurs preferentially near the telomeres and represses gene transcription.

It localises to the nucleus. The protein resides in the chromosome. In terms of biological role, core component of nucleosome. Nucleosomes wrap and compact DNA into chromatin, limiting DNA accessibility to the cellular machineries which require DNA as a template. Histones thereby play a central role in transcription regulation, DNA repair, DNA replication and chromosomal stability. DNA accessibility is regulated via a complex set of post-translational modifications of histones, also called histone code, and nucleosome remodeling. In Coccidioides immitis (strain RS) (Valley fever fungus), this protein is Histone H2B (HTB1).